A 395-amino-acid polypeptide reads, in one-letter code: MILTSESVTEGHPDKLCDQISDAILDGVICKDKNARAGIETIAGNGVVHVFGEVSNPDSVDIPGIIRKTILDIGYTSEDAGIDGNTCSIQESITSQSKEIADAVNFSLEYRNQQGDLGRNSFSQQGSGDQGSVFGYACRETPEMMPLPITIAHKLAYSLAFVRKEKILPYLLPDGKSQVTLGYDSANRPKTLETVVISAQHEDSVDLDKLRFDILERVVRPVISATGLDCSKATFLINPAGRFVTGGPSADSGLTGRKIVVDTYGCAAKHGGGALSGKDPSKLDRFASYMARWVAKHVVAADFAESIEVQISYAIGKAHPVAFNIDTHGTSTIALDKLKCAILKVFDFRPAAVIDSLDLKRPIYQKTAAYGHFGRDIFTWERICPDKLNALLGAV.

Position 12 (histidine 12) interacts with ATP. Aspartate 14 contributes to the Mg(2+) binding site. A K(+)-binding site is contributed by glutamate 40. Positions 53 and 96 each coordinate L-methionine. Positions glutamine 96–phenylalanine 106 are flexible loop. ATP contacts are provided by residues aspartate 174–lysine 176, arginine 242–phenylalanine 243, aspartate 251, arginine 257–lysine 258, alanine 274, and lysine 278. Residue aspartate 251 participates in L-methionine binding. Lysine 282 lines the L-methionine pocket.

Belongs to the AdoMet synthase family. Homotetramer; dimer of dimers. The cofactor is Mg(2+). It depends on K(+) as a cofactor.

The protein resides in the cytoplasm. The enzyme catalyses L-methionine + ATP + H2O = S-adenosyl-L-methionine + phosphate + diphosphate. The protein operates within amino-acid biosynthesis; S-adenosyl-L-methionine biosynthesis; S-adenosyl-L-methionine from L-methionine: step 1/1. Functionally, catalyzes the formation of S-adenosylmethionine (AdoMet) from methionine and ATP. The overall synthetic reaction is composed of two sequential steps, AdoMet formation and the subsequent tripolyphosphate hydrolysis which occurs prior to release of AdoMet from the enzyme. The polypeptide is S-adenosylmethionine synthase (Tropheryma whipplei (strain TW08/27) (Whipple's bacillus)).